A 647-amino-acid polypeptide reads, in one-letter code: Threonine--tRNA ligase (647 aa).

The TGS domain occupies 1–61 (MIKITFPDGA…EEDGSIEIVT (61 aa)). Residues 240–538 (DHRKLGKELD…LIETYKGAFP (299 aa)) are catalytic. Positions 334, 385, and 515 each coordinate Zn(2+).

Belongs to the class-II aminoacyl-tRNA synthetase family. As to quaternary structure, homodimer. Zn(2+) is required as a cofactor.

The protein resides in the cytoplasm. It catalyses the reaction tRNA(Thr) + L-threonine + ATP = L-threonyl-tRNA(Thr) + AMP + diphosphate + H(+). In terms of biological role, catalyzes the attachment of threonine to tRNA(Thr) in a two-step reaction: L-threonine is first activated by ATP to form Thr-AMP and then transferred to the acceptor end of tRNA(Thr). Also edits incorrectly charged L-seryl-tRNA(Thr). The polypeptide is Threonine--tRNA ligase (Streptococcus pyogenes serotype M49 (strain NZ131)).